Reading from the N-terminus, the 454-residue chain is Bifunctional protein GlmU (454 aa).

The segment at 1-226 (MALNVVILAA…AIEVEGANNR (226 aa)) is pyrophosphorylase. UDP-N-acetyl-alpha-D-glucosamine is bound by residues 8–11 (LAAG), lysine 22, glutamine 73, 78–79 (GT), 100–102 (YGD), glycine 137, glutamate 151, asparagine 166, and asparagine 224. Aspartate 102 lines the Mg(2+) pocket. Asparagine 224 contributes to the Mg(2+) binding site. Residues 227 to 247 (VQLAQLERAYQAREAEKLMIA) form a linker region. The tract at residues 248–454 (GANLRDPSRI…GWQRPVKIKE (207 aa)) is N-acetyltransferase. UDP-N-acetyl-alpha-D-glucosamine-binding residues include arginine 330 and lysine 348. The active-site Proton acceptor is histidine 360. Residues tyrosine 363 and asparagine 374 each contribute to the UDP-N-acetyl-alpha-D-glucosamine site. Residues alanine 377, 383-384 (NY), serine 402, alanine 420, and arginine 437 contribute to the acetyl-CoA site.

In the N-terminal section; belongs to the N-acetylglucosamine-1-phosphate uridyltransferase family. The protein in the C-terminal section; belongs to the transferase hexapeptide repeat family. As to quaternary structure, homotrimer. Requires Mg(2+) as cofactor.

It is found in the cytoplasm. The catalysed reaction is alpha-D-glucosamine 1-phosphate + acetyl-CoA = N-acetyl-alpha-D-glucosamine 1-phosphate + CoA + H(+). It carries out the reaction N-acetyl-alpha-D-glucosamine 1-phosphate + UTP + H(+) = UDP-N-acetyl-alpha-D-glucosamine + diphosphate. The protein operates within nucleotide-sugar biosynthesis; UDP-N-acetyl-alpha-D-glucosamine biosynthesis; N-acetyl-alpha-D-glucosamine 1-phosphate from alpha-D-glucosamine 6-phosphate (route II): step 2/2. It participates in nucleotide-sugar biosynthesis; UDP-N-acetyl-alpha-D-glucosamine biosynthesis; UDP-N-acetyl-alpha-D-glucosamine from N-acetyl-alpha-D-glucosamine 1-phosphate: step 1/1. Its pathway is bacterial outer membrane biogenesis; LPS lipid A biosynthesis. In terms of biological role, catalyzes the last two sequential reactions in the de novo biosynthetic pathway for UDP-N-acetylglucosamine (UDP-GlcNAc). The C-terminal domain catalyzes the transfer of acetyl group from acetyl coenzyme A to glucosamine-1-phosphate (GlcN-1-P) to produce N-acetylglucosamine-1-phosphate (GlcNAc-1-P), which is converted into UDP-GlcNAc by the transfer of uridine 5-monophosphate (from uridine 5-triphosphate), a reaction catalyzed by the N-terminal domain. The chain is Bifunctional protein GlmU from Shewanella sp. (strain MR-7).